Reading from the N-terminus, the 215-residue chain is N-(5'-phosphoribosyl)anthranilate isomerase (215 aa).

It belongs to the TrpF family.

The catalysed reaction is N-(5-phospho-beta-D-ribosyl)anthranilate = 1-(2-carboxyphenylamino)-1-deoxy-D-ribulose 5-phosphate. Its pathway is amino-acid biosynthesis; L-tryptophan biosynthesis; L-tryptophan from chorismate: step 3/5. This chain is N-(5'-phosphoribosyl)anthranilate isomerase, found in Sinorhizobium medicae (strain WSM419) (Ensifer medicae).